The chain runs to 275 residues: Penicillin-insensitive murein endopeptidase (275 aa).

The signal sequence occupies residues 1-19; it reads MKNWIVGMVALVTMVPVMA. 3 cysteine pairs are disulfide-bonded: C44-C264, C187-C235, and C216-C223. 5 residues coordinate Zn(2+): H110, H113, D120, D147, and H211. Positions 227–262 are disordered; it reads DTPPPGDGCGAELESWFQPPPPSAKPGKTLPPPLPP. Pro residues predominate over residues 244–262; it reads QPPPPSAKPGKTLPPPLPP.

It belongs to the peptidase M74 family. Dimer. It depends on Zn(2+) as a cofactor.

The protein resides in the periplasm. Functionally, murein endopeptidase that cleaves the D-alanyl-meso-2,6-diamino-pimelyl amide bond that connects peptidoglycan strands. Likely plays a role in the removal of murein from the sacculus. The sequence is that of Penicillin-insensitive murein endopeptidase from Yersinia pestis.